Consider the following 461-residue polypeptide: Asparagine--tRNA ligase (461 aa).

The protein belongs to the class-II aminoacyl-tRNA synthetase family. As to quaternary structure, homodimer.

It localises to the cytoplasm. The enzyme catalyses tRNA(Asn) + L-asparagine + ATP = L-asparaginyl-tRNA(Asn) + AMP + diphosphate + H(+). The protein is Asparagine--tRNA ligase of Oleidesulfovibrio alaskensis (strain ATCC BAA-1058 / DSM 17464 / G20) (Desulfovibrio alaskensis).